The following is a 779-amino-acid chain: Neutral ceramidase 1 (779 aa).

The active-site Nucleophile is Ser350. Residues Asn368, Asn432, and Asn667 are each glycosylated (N-linked (GlcNAc...) asparagine).

It belongs to the neutral ceramidase family. As to expression, mostly expressed in stems, leaves, roots and siliques, and, to a lower extent, in flowers.

It localises to the secreted. It is found in the endoplasmic reticulum. The protein localises to the golgi apparatus. The catalysed reaction is an N-acylsphing-4-enine + H2O = sphing-4-enine + a fatty acid. Hydrolyzes the sphingolipid ceramide into sphingosine and free fatty acid. Regulates sphingolipid homeostasis. Promotes oxidative stress resistance. This is Neutral ceramidase 1 from Arabidopsis thaliana (Mouse-ear cress).